The following is a 323-amino-acid chain: Elongation factor P--(R)-beta-lysine ligase (323 aa).

Ser76–Glu78 contacts substrate. ATP contacts are provided by residues Arg100–Glu102 and Asn109. Tyr118 provides a ligand contact to substrate. Glu242 to Leu243 serves as a coordination point for ATP. A substrate-binding site is contributed by Glu249. Gly298 contacts ATP.

It belongs to the class-II aminoacyl-tRNA synthetase family. EpmA subfamily. Homodimer.

The catalysed reaction is D-beta-lysine + L-lysyl-[protein] + ATP = N(6)-((3R)-3,6-diaminohexanoyl)-L-lysyl-[protein] + AMP + diphosphate + H(+). With EpmB is involved in the beta-lysylation step of the post-translational modification of translation elongation factor P (EF-P). Catalyzes the ATP-dependent activation of (R)-beta-lysine produced by EpmB, forming a lysyl-adenylate, from which the beta-lysyl moiety is then transferred to the epsilon-amino group of a conserved specific lysine residue in EF-P. The protein is Elongation factor P--(R)-beta-lysine ligase of Histophilus somni (strain 129Pt) (Haemophilus somnus).